A 67-amino-acid chain; its full sequence is Probable Sec-independent protein translocase protein TatE (67 aa).

A helical membrane pass occupies residues 1 to 21 (MEGISIAKLLIIGALIVLLFG). Residues 44 to 67 (KDEDTSAARTTAEETPAERVSHKD) form a disordered region.

It belongs to the TatA/E family. TatE subfamily.

The protein resides in the cell inner membrane. Functionally, part of the twin-arginine translocation (Tat) system that transports large folded proteins containing a characteristic twin-arginine motif in their signal peptide across membranes. TatE shares overlapping functions with TatA. This chain is Probable Sec-independent protein translocase protein TatE, found in Pantoea ananatis (strain LMG 20103).